A 748-amino-acid chain; its full sequence is Chondroadherin-like protein (748 aa).

The first 29 residues, 1–29, serve as a signal peptide directing secretion; the sequence is MERPQSSIWVFMLLLFMVLLQSPAWHVAA. The LRRNT 1 domain maps to 30-61; the sequence is QRCPQTCVCDNSRRHVTCRHQNLTEVPNTIPE. N-linked (GlcNAc...) asparagine glycosylation occurs at N51. LRR repeat units lie at residues 85–107, 108–131, 132–155, 156–179, 181–203, 204–227, 229–252, 253–275, and 276–299; these read PHLT…AFRG, LGRL…ALDG, LGSL…TFGA, LGSL…AFQG, LRTR…ALAG, LPAL…ALSQ, RSLA…GLAL, PGLR…AFAH, and CPRL…QVPG. The region spanning 309 to 357 is the LRRCT 1 domain; the sequence is NPLWCACHARPLLEWLVRARVRSDGACRGPRRLRGEALDTLRPSDLRCP. A disordered region spans residues 352–389; it reads SDLRCPGDAAAGDGDGDEDEDRPAGPRAPPLRSPHGEA. Residues 394-428 form the LRRNT 2 domain; sequence PCPPACACVAETRHSTCDGRGLQAVPRGFPNDTQL. C395 and C410 are oxidised to a cystine. LRR repeat units lie at residues 423-446, 448-470, 471-494, 496-518, 519-542, 544-566, 567-590, 591-614, 616-639, and 641-665; these read PNDT…AFPG, RHLV…ALAG, LDRL…ALEG, PNLG…ALRA, LPTL…DLAG, RALR…ALGP, AREL…ALEG, LPAL…AFQP, GRSL…AFSG, and GKGL…GLSG. An N-linked (GlcNAc...) asparagine glycan is attached at N625. The LRRCT 2 domain occupies 674–722; the sequence is NPFHCDCQLLPLHRWLTGLNLRVGATCATPPSVRGQKVKVAAPVFEACP. 2 disulfides stabilise this stretch: C678–C721 and C680–C700. Residues 728–748 are disordered; it reads KAKRTPTSRGSARRTPSLSRH. Over residues 734–748 the composition is skewed to polar residues; the sequence is TSRGSARRTPSLSRH.

This sequence belongs to the small leucine-rich proteoglycan (SLRP) family. SLRP class IV subfamily. As to quaternary structure, associates with collagen and binds to collagen fibrils. In terms of tissue distribution, expressed in cartilage, including articular knee cartilage, where it localizes to the extracellular space in the area immediately surrounding the chondrocytes, not detected in any other tissues (at protein level).

It is found in the secreted. The protein localises to the extracellular space. It localises to the extracellular matrix. Functionally, potential negative modulator of chondrocyte differentiation. Inhibits collagen fibrillogenesis in vitro. May influence chondrocyte's differentiation by acting on its cellular collagenous microenvironment. This is Chondroadherin-like protein (Chadl) from Mus musculus (Mouse).